Here is a 117-residue protein sequence, read N- to C-terminus: DNA-binding protein RdgB (117 aa).

A DNA-binding region (H-T-H motif) is located at residues 82–102 (NHSALAKKYNVSLQWIYKIVR).

The protein belongs to the c/mor transcriptional regulatory family.

Functionally, regulates pectin lyase production in response to DNA damage. This is DNA-binding protein RdgB (rdgB) from Pectobacterium carotovorum subsp. carotovorum (Erwinia carotovora subsp. carotovora).